Reading from the N-terminus, the 147-residue chain is Lysozyme C-2 (147 aa).

The first 18 residues, 1 to 18 (MKALVILGFLFLSVAVQG), serve as a signal peptide directing secretion. The region spanning 19 to 147 (KVFERCELAR…VSSYVEGCTL (129 aa)) is the C-type lysozyme domain. Cystine bridges form between Cys-24–Cys-145, Cys-48–Cys-133, Cys-83–Cys-99, and Cys-95–Cys-113. Catalysis depends on residues Glu-53 and Asp-71.

This sequence belongs to the glycosyl hydrolase 22 family. As to quaternary structure, monomer. In terms of tissue distribution, stomach-specific.

It carries out the reaction Hydrolysis of (1-&gt;4)-beta-linkages between N-acetylmuramic acid and N-acetyl-D-glucosamine residues in a peptidoglycan and between N-acetyl-D-glucosamine residues in chitodextrins.. Its function is as follows. Lysozymes have primarily a bacteriolytic function; those in tissues and body fluids are associated with the monocyte-macrophage system and enhance the activity of immunoagents. The polypeptide is Lysozyme C-2 (LYZ2) (Bos taurus (Bovine)).